A 164-amino-acid polypeptide reads, in one-letter code: MAISVAASSSMAVMVPRVPAVSTRCSAVPYLPPRSFGRSSFTVPLKLVSGNGLQKVELLKTRASSEETSSIDTNELITDLKEKWDGLENKSTVLIYGGGAIVAVWLSSIVVGAINSVPLLPKVMELVGLGYTGWFVYRYLLFKSSRKELAEDIESLKKKIAGSE.

The N-terminal 62 residues, 1–62 (MAISVAASSS…LQKVELLKTR (62 aa)), are a transit peptide targeting the chloroplast. Ala-63 carries the post-translational modification N-acetylalanine. The Stromal segment spans residues 63–93 (ASSEETSSIDTNELITDLKEKWDGLENKSTV). Residues 94 to 114 (LIYGGGAIVAVWLSSIVVGAI) traverse the membrane as a helical segment. Residues 115 to 116 (NS) lie on the Lumenal side of the membrane. The helical transmembrane segment at 117–137 (VPLLPKVMELVGLGYTGWFVY) threads the bilayer. Over 138–164 (RYLLFKSSRKELAEDIESLKKKIAGSE) the chain is Stromal. The stretch at 140-164 (LLFKSSRKELAEDIESLKKKIAGSE) forms a coiled coil.

It belongs to the CURT family. Homo- and heterodimers and trimers.

The protein localises to the plastid. It localises to the chloroplast. Its subcellular location is the plastoglobule. The protein resides in the membrane. It is found in the chloroplast thylakoid membrane. Determines thylakoid architecture by inducing membrane curvature. In Arabidopsis thaliana (Mouse-ear cress), this protein is Protein CURVATURE THYLAKOID 1A, chloroplastic (CURT1A).